Consider the following 349-residue polypeptide: DNA polymerase IV (349 aa).

The UmuC domain occupies I7 to G188. Positions 11 and 106 each coordinate Mg(2+). E107 is a catalytic residue.

This sequence belongs to the DNA polymerase type-Y family. In terms of assembly, monomer. Mg(2+) is required as a cofactor.

Its subcellular location is the cytoplasm. The catalysed reaction is DNA(n) + a 2'-deoxyribonucleoside 5'-triphosphate = DNA(n+1) + diphosphate. Its function is as follows. Poorly processive, error-prone DNA polymerase involved in untargeted mutagenesis. Copies undamaged DNA at stalled replication forks, which arise in vivo from mismatched or misaligned primer ends. These misaligned primers can be extended by PolIV. Exhibits no 3'-5' exonuclease (proofreading) activity. May be involved in translesional synthesis, in conjunction with the beta clamp from PolIII. This is DNA polymerase IV from Francisella tularensis subsp. holarctica (strain OSU18).